A 355-amino-acid polypeptide reads, in one-letter code: Guanine nucleotide-binding protein G(q) subunit alpha (355 aa).

Cys-3 carries the S-palmitoyl cysteine lipid modification. The region spanning 32–355 (KEIKLLLLGT…QHITEVVPGL (324 aa)) is the G-alpha domain. A G1 motif region spans residues 35-48 (KLLLLGTGESGKST). GTP-binding positions include 40–47 (GTGESGKS), 174–180 (LRVRVPT), 199–203 (DVGGQ), 269–272 (NKKD), and Ala-326. Residues Ser-47 and Thr-180 each contribute to the Mg(2+) site. The G2 motif stretch occupies residues 172–180 (DVLRVRVPT). The segment at 195–204 (FKMVDVGGQR) is G3 motif. Residues 265-272 (ILFLNKKD) form a G4 motif region. A G5 motif region spans residues 324–329 (TCATDT).

The protein belongs to the G-alpha family. G(q) subfamily. G proteins are composed of 3 units; alpha, beta and gamma. The alpha chain contains the guanine nucleotide binding site.

Guanine nucleotide-binding proteins (G proteins) are involved as modulators or transducers in various transmembrane signaling systems. The polypeptide is Guanine nucleotide-binding protein G(q) subunit alpha (Geodia cydonium (Sponge)).